We begin with the raw amino-acid sequence, 789 residues long: Protein translocase subunit SecA 2 (789 aa).

ATP-binding positions include Gln-79, 97-101 (GEGKT), and Asp-487.

It belongs to the SecA family. As to quaternary structure, monomer and homodimer. Part of the essential Sec protein translocation apparatus which comprises SecA, SecYEG and auxiliary proteins SecDF. Other proteins may also be involved.

Its subcellular location is the cell membrane. The protein resides in the cytoplasm. The enzyme catalyses ATP + H2O + cellular proteinSide 1 = ADP + phosphate + cellular proteinSide 2.. Functionally, part of the Sec protein translocase complex. Interacts with the SecYEG preprotein conducting channel. Has a central role in coupling the hydrolysis of ATP to the transfer of proteins into and across the cell membrane, serving as an ATP-driven molecular motor driving the stepwise translocation of polypeptide chains across the membrane. The protein is Protein translocase subunit SecA 2 of Pediococcus pentosaceus (strain ATCC 25745 / CCUG 21536 / LMG 10740 / 183-1w).